The chain runs to 186 residues: Guanylate kinase (186 aa).

The Guanylate kinase-like domain occupies 5–183 (GNLTVLTGPS…AFKEIEGFMG (179 aa)). An ATP-binding site is contributed by 12–19 (GPSGVGKG).

Belongs to the guanylate kinase family.

It is found in the cytoplasm. It carries out the reaction GMP + ATP = GDP + ADP. Its function is as follows. Essential for recycling GMP and indirectly, cGMP. This is Guanylate kinase from Prochlorococcus marinus (strain NATL2A).